A 544-amino-acid polypeptide reads, in one-letter code: Chaperonin GroEL 1 (544 aa).

ATP-binding positions include 30–33, lysine 51, 87–91, glycine 415, and aspartate 494; these read TLGP and DGTTT.

Belongs to the chaperonin (HSP60) family. In terms of assembly, forms a cylinder of 14 subunits composed of two heptameric rings stacked back-to-back. Interacts with the co-chaperonin GroES.

The protein resides in the cytoplasm. The catalysed reaction is ATP + H2O + a folded polypeptide = ADP + phosphate + an unfolded polypeptide.. In terms of biological role, together with its co-chaperonin GroES, plays an essential role in assisting protein folding. The GroEL-GroES system forms a nano-cage that allows encapsulation of the non-native substrate proteins and provides a physical environment optimized to promote and accelerate protein folding. This Syntrophus aciditrophicus (strain SB) protein is Chaperonin GroEL 1.